Consider the following 541-residue polypeptide: Carboxypeptidase Y homolog A (541 aa).

The signal sequence occupies residues 1-17 (MKVATSALLIGAAAAQQ). The propeptide occupies 18 to 125 (QQILKFPDSF…KLEQYSLRAK (108 aa)). Disulfide bonds link cysteine 179–cysteine 418, cysteine 313–cysteine 327, cysteine 337–cysteine 360, cysteine 344–cysteine 353, and cysteine 382–cysteine 388. Asparagine 210 carries an N-linked (GlcNAc...) asparagine glycan. Serine 266 is an active-site residue. Residue aspartate 457 is part of the active site. A glycan (N-linked (GlcNAc...) asparagine) is linked at asparagine 505. Residue histidine 516 is part of the active site.

The protein belongs to the peptidase S10 family.

Its subcellular location is the vacuole. The enzyme catalyses Release of a C-terminal amino acid with broad specificity.. Its function is as follows. Vacuolar carboxypeptidase involved in degradation of small peptides. Digests preferentially peptides containing an aliphatic or hydrophobic residue in P1' position, as well as methionine, leucine or phenylalanine in P1 position of ester substrate. The protein is Carboxypeptidase Y homolog A (cpyA) of Pyrenophora tritici-repentis (strain Pt-1C-BFP) (Wheat tan spot fungus).